A 98-amino-acid polypeptide reads, in one-letter code: NADH-ubiquinone oxidoreductase chain 4L (98 aa).

Transmembrane regions (helical) follow at residues 1–21 (MSLTYMNMFMAFTISLLGLLM), 29–49 (SLLCLEGMMLSLFVMMTMTIL), and 61–81 (IILLVFAACEAALGLSLLVMV).

Belongs to the complex I subunit 4L family. Core subunit of respiratory chain NADH dehydrogenase (Complex I) which is composed of 45 different subunits.

Its subcellular location is the mitochondrion inner membrane. The enzyme catalyses a ubiquinone + NADH + 5 H(+)(in) = a ubiquinol + NAD(+) + 4 H(+)(out). Functionally, core subunit of the mitochondrial membrane respiratory chain NADH dehydrogenase (Complex I) which catalyzes electron transfer from NADH through the respiratory chain, using ubiquinone as an electron acceptor. Part of the enzyme membrane arm which is embedded in the lipid bilayer and involved in proton translocation. The polypeptide is NADH-ubiquinone oxidoreductase chain 4L (MT-ND4L) (Chiroderma trinitatum (Little big-eyed bat)).